Here is a 478-residue protein sequence, read N- to C-terminus: Adenosylhomocysteinase (478 aa).

Thr-57, Asp-139, and Glu-201 together coordinate substrate. Position 202–204 (202–204 (TTT)) interacts with NAD(+). Substrate-binding residues include Lys-231 and Asp-235. NAD(+)-binding positions include Asn-236, 265 to 270 (GYGDVG), Glu-288, Asn-323, 344 to 346 (IGH), and Asn-392.

This sequence belongs to the adenosylhomocysteinase family. It depends on NAD(+) as a cofactor.

Its subcellular location is the cytoplasm. It catalyses the reaction S-adenosyl-L-homocysteine + H2O = L-homocysteine + adenosine. It functions in the pathway amino-acid biosynthesis; L-homocysteine biosynthesis; L-homocysteine from S-adenosyl-L-homocysteine: step 1/1. Its function is as follows. May play a key role in the regulation of the intracellular concentration of adenosylhomocysteine. This is Adenosylhomocysteinase from Corynebacterium glutamicum (strain R).